The chain runs to 307 residues: Ribonuclease Z (307 aa).

Residues histidine 61, histidine 63, aspartate 65, histidine 66, histidine 138, aspartate 208, and histidine 264 each coordinate Zn(2+). The active-site Proton acceptor is aspartate 65.

Belongs to the RNase Z family. In terms of assembly, homodimer. Zn(2+) serves as cofactor.

The enzyme catalyses Endonucleolytic cleavage of RNA, removing extra 3' nucleotides from tRNA precursor, generating 3' termini of tRNAs. A 3'-hydroxy group is left at the tRNA terminus and a 5'-phosphoryl group is left at the trailer molecule.. In terms of biological role, zinc phosphodiesterase, which displays some tRNA 3'-processing endonuclease activity. Probably involved in tRNA maturation, by removing a 3'-trailer from precursor tRNA. Also shows activity toward a broad range of substrates, such as intron containing pre-tRNAs, 5' extended precursors and non-RNA substrates. The sequence is that of Ribonuclease Z from Pyrococcus furiosus (strain ATCC 43587 / DSM 3638 / JCM 8422 / Vc1).